The chain runs to 87 residues: UPF0250 protein NE1487 (87 aa).

Belongs to the UPF0250 family.

The chain is UPF0250 protein NE1487 from Nitrosomonas europaea (strain ATCC 19718 / CIP 103999 / KCTC 2705 / NBRC 14298).